The sequence spans 252 residues: Serine/threonine phosphatase stp (252 aa).

Positions 1-18 are enriched in basic and acidic residues; that stretch reads MHAEFRTDRGRIRHHNED. A disordered region spans residues 1-23; it reads MHAEFRTDRGRIRHHNEDNGGVF. Residues 2 to 242 enclose the PPM-type phosphatase domain; sequence HAEFRTDRGR…DNITVLLVER (241 aa). Mn(2+) is bound by residues Asp-36, Gly-37, Asp-194, and Asp-233.

The protein belongs to the PP2C family. It depends on Mn(2+) as a cofactor.

The protein localises to the cytoplasm. It is found in the membrane. It catalyses the reaction O-phospho-L-seryl-[protein] + H2O = L-seryl-[protein] + phosphate. It carries out the reaction O-phospho-L-threonyl-[protein] + H2O = L-threonyl-[protein] + phosphate. Functionally, protein phosphatase that dephosphorylates EF-Tu. This is Serine/threonine phosphatase stp (stp) from Listeria monocytogenes serotype 4b (strain F2365).